The chain runs to 193 residues: Rho-related GTP-binding protein RhoA-D (193 aa).

GTP is bound by residues G12–T19, F30–T37, D59–Q63, N117–D120, and S160–K162. Y34 carries a (Microbial infection) O-linked (GlcNAc) tyrosine; by Yersinia Afp18 glycan. C190 carries the cysteine methyl ester modification. C190 carries S-geranylgeranyl cysteine lipidation. The propeptide at L191 to L193 is removed in mature form.

Belongs to the small GTPase superfamily. Rho family. In terms of processing, (Microbial infection) Glycosylated at Tyr-34 by Yersinia ruckeri toxin Afp18. Mono-O-GlcNAcylation by Afp18 inhibits RhoA activation by guanine nucleotide exchange factors and blocks RhoA signaling.

The protein localises to the cell membrane. In terms of biological role, regulates a signal transduction pathway linking plasma membrane receptors to the assembly of focal adhesions and actin stress fibers. The chain is Rho-related GTP-binding protein RhoA-D from Danio rerio (Zebrafish).